The sequence spans 644 residues: Exoribonuclease 2 (644 aa).

The region spanning arginine 189–lysine 516 is the RNB domain. Residues asparagine 561–alanine 643 form the S1 motif domain.

The protein belongs to the RNR ribonuclease family. RNase II subfamily.

It localises to the cytoplasm. It carries out the reaction Exonucleolytic cleavage in the 3'- to 5'-direction to yield nucleoside 5'-phosphates.. In terms of biological role, involved in mRNA degradation. Hydrolyzes single-stranded polyribonucleotides processively in the 3' to 5' direction. This chain is Exoribonuclease 2, found in Salmonella agona (strain SL483).